The primary structure comprises 110 residues: Large ribosomal subunit protein uL22 (110 aa).

It belongs to the universal ribosomal protein uL22 family. As to quaternary structure, part of the 50S ribosomal subunit.

This protein binds specifically to 23S rRNA; its binding is stimulated by other ribosomal proteins, e.g. L4, L17, and L20. It is important during the early stages of 50S assembly. It makes multiple contacts with different domains of the 23S rRNA in the assembled 50S subunit and ribosome. Functionally, the globular domain of the protein is located near the polypeptide exit tunnel on the outside of the subunit, while an extended beta-hairpin is found that lines the wall of the exit tunnel in the center of the 70S ribosome. This chain is Large ribosomal subunit protein uL22, found in Pseudoalteromonas translucida (strain TAC 125).